The sequence spans 223 residues: UPF0502 protein Shew185_1758 (223 aa).

It belongs to the UPF0502 family.

This Shewanella baltica (strain OS185) protein is UPF0502 protein Shew185_1758.